We begin with the raw amino-acid sequence, 124 residues long: Small ribosomal subunit protein eS6 (124 aa).

The protein belongs to the eukaryotic ribosomal protein eS6 family.

The chain is Small ribosomal subunit protein eS6 from Thermoplasma acidophilum (strain ATCC 25905 / DSM 1728 / JCM 9062 / NBRC 15155 / AMRC-C165).